The sequence spans 190 residues: MIGRITGTLIEKSPPVVCVDVNGVGYEIDVPMSTLYALPETGARVTLFTHLVVREDAQLLYGFGSSAERSTFRELIKVTGIGARTALAVLSGLSVAELSQAITLQETGRLTRVPGIGKKTAERLLLEMRGKLGADIGATPHAAGGHQSDILNALLALGYSDKESQAALKKLPEGVDVSEGIRLALKALVR.

Residues 1-64 (MIGRITGTLI…EDAQLLYGFG (64 aa)) are domain I. The tract at residues 65–137 (SSAERSTFRE…MRGKLGADIG (73 aa)) is domain II. The flexible linker stretch occupies residues 137 to 141 (GATPH). The domain III stretch occupies residues 142-190 (AAGGHQSDILNALLALGYSDKESQAALKKLPEGVDVSEGIRLALKALVR).

The protein belongs to the RuvA family. As to quaternary structure, homotetramer. Forms an RuvA(8)-RuvB(12)-Holliday junction (HJ) complex. HJ DNA is sandwiched between 2 RuvA tetramers; dsDNA enters through RuvA and exits via RuvB. An RuvB hexamer assembles on each DNA strand where it exits the tetramer. Each RuvB hexamer is contacted by two RuvA subunits (via domain III) on 2 adjacent RuvB subunits; this complex drives branch migration. In the full resolvosome a probable DNA-RuvA(4)-RuvB(12)-RuvC(2) complex forms which resolves the HJ.

It is found in the cytoplasm. The RuvA-RuvB-RuvC complex processes Holliday junction (HJ) DNA during genetic recombination and DNA repair, while the RuvA-RuvB complex plays an important role in the rescue of blocked DNA replication forks via replication fork reversal (RFR). RuvA specifically binds to HJ cruciform DNA, conferring on it an open structure. The RuvB hexamer acts as an ATP-dependent pump, pulling dsDNA into and through the RuvAB complex. HJ branch migration allows RuvC to scan DNA until it finds its consensus sequence, where it cleaves and resolves the cruciform DNA. The protein is Holliday junction branch migration complex subunit RuvA of Bordetella parapertussis (strain 12822 / ATCC BAA-587 / NCTC 13253).